The primary structure comprises 68 residues: Metallothionein (68 aa).

Belongs to the metallothionein superfamily. Type 4 family.

Metallothioneins have a high content of cysteine residues that bind various heavy metals. In Lytechinus pictus (Painted sea urchin), this protein is Metallothionein (MT1).